The sequence spans 462 residues: Sensor histidine kinase RegB (462 aa).

Over 1 to 25 (MILGPDGILNRDTRGDWVRLRTLIL) the chain is Cytoplasmic. Residues 26–45 (LRWMAVAGQLAAIVVTDWYL) traverse the membrane as a helical segment. The Extracellular segment spans residues 46 to 51 (GVRLPM). A helical transmembrane segment spans residues 52–70 (GLCFMAVGASVIANVIATF). The Cytoplasmic segment spans residues 71-78 (VFPQNRRL). The chain crosses the membrane as a helical span at residues 79–96 (TEFQALMILLFDLTQLSF). Residues 97 to 103 (LLFLTGG) are Extracellular-facing. A helical transmembrane segment spans residues 104 to 123 (LTNPFALLILAPVTISALAL). Residues 124–129 (ELRTTV) are Cytoplasmic-facing. The helical transmembrane segment at 130–149 (ILGAIAIGLLTFTAYFHLPL) threads the bilayer. Topologically, residues 150–164 (ILADGSSLSVPRMFE) are extracellular. A helical transmembrane segment spans residues 165 to 182 (FGFWLAIVIGILFLGLYS). Residues 183 to 462 (RRVAIEIRSM…PLGENVLIQT (280 aa)) are Cytoplasmic-facing. The region spanning 218-445 (AAAHELGTPL…IVEVIWPVDR (228 aa)) is the Histidine kinase domain. His-221 is modified (phosphohistidine; by autocatalysis).

The protein localises to the cell inner membrane. The enzyme catalyses ATP + protein L-histidine = ADP + protein N-phospho-L-histidine.. In terms of biological role, member of the two-component regulatory system RegB/RegA. Involved in the positive regulation of photosynthesis gene expression in response to anaerobiosis. Also involved in positive regulation of the cbbI and cbbII Calvin cycle CO2 fixation operons, as well as in regulation of expression of genes involved in alternative CO2 fixation pathways. Phosphorylates RegA/PrrA. The polypeptide is Sensor histidine kinase RegB (regB) (Cereibacter sphaeroides (strain ATCC 17023 / DSM 158 / JCM 6121 / CCUG 31486 / LMG 2827 / NBRC 12203 / NCIMB 8253 / ATH 2.4.1.) (Rhodobacter sphaeroides)).